A 728-amino-acid polypeptide reads, in one-letter code: Myb-related protein A (728 aa).

The disordered stretch occupies residues 1 to 31; the sequence is MAGRARSEDEEEDGQFTEHDYDVSLQKGPKK. 3 consecutive HTH myb-type domains span residues 30 to 80, 81 to 136, and 137 to 187; these read KKPW…HKVL, SPEL…NPDV, and KKSS…KRKV. DNA-binding regions (H-T-H motif) lie at residues 57–80, 109–132, and 160–183; these read WGVVARHFINRSEVQCQHRWHKVL, WSIIAKHLKGRIGKQCRERWHNHL, and WAEIAKLLPGRTDNSIKNHWNSTM. Residues 230 to 293 are transcriptional activation domain; it reads IPRYSSLSHD…RKRVPSGSSL (64 aa). The segment at 296–534 is negative regulatory domain; that stretch reads SESYHMGESM…IRRSLMAVTP (239 aa).

In terms of assembly, component of the DREAM complex.

The protein resides in the nucleus. Functionally, transcription factor that specifically recognizes the sequence 5'-YAAC[GT]G-3'. Acts as a master regulator of male meiosis by promoting expression of piRNAs. The piRNA metabolic process mediates the repression of transposable elements during meiosis by forming complexes composed of piRNAs and Piwi proteins and governs the methylation and subsequent repression of transposons, which is essential for the germline integrity. This is Myb-related protein A (mybl1) from Xenopus laevis (African clawed frog).